A 278-amino-acid polypeptide reads, in one-letter code: uncharacterized protein (278 aa).

This is an uncharacterized protein from Escherichia coli (Bacteriophage T4).